The following is a 90-amino-acid chain: DNA-binding protein HU (90 aa).

It belongs to the bacterial histone-like protein family. In terms of assembly, homodimer.

In terms of biological role, histone-like DNA-binding protein which is capable of wrapping DNA to stabilize it, and thus to prevent its denaturation under extreme environmental conditions. The polypeptide is DNA-binding protein HU (hup) (Haemophilus influenzae (strain ATCC 51907 / DSM 11121 / KW20 / Rd)).